The chain runs to 208 residues: Large ribosomal subunit protein eL13 (208 aa).

Belongs to the eukaryotic ribosomal protein eL13 family.

The sequence is that of Large ribosomal subunit protein eL13 (RPL13) from Chlamydomonas sp. (strain W80).